Reading from the N-terminus, the 150-residue chain is Arginine repressor (150 aa).

It belongs to the ArgR family.

The protein localises to the cytoplasm. It functions in the pathway amino-acid biosynthesis; L-arginine biosynthesis [regulation]. Its function is as follows. Regulates arginine biosynthesis genes. This Finegoldia magna (strain ATCC 29328 / DSM 20472 / WAL 2508) (Peptostreptococcus magnus) protein is Arginine repressor.